The primary structure comprises 390 residues: GTP 3',8-cyclase, mitochondrial (390 aa).

The transit peptide at 1–45 directs the protein to the mitochondrion; sequence MRRCFSKITDCHLGFKNSNFLLVGSEVGSGSVTRTITTTTSERLF. The region spanning 69–290 is the Radical SAM core domain; the sequence is KFGRLHTYLR…PSIKRMQDHP (222 aa). Arg-78 contributes to the GTP binding site. The [4Fe-4S] cluster site is built by Cys-85 and Cys-89. Tyr-91 serves as a coordination point for S-adenosyl-L-methionine. A [4Fe-4S] cluster-binding site is contributed by Cys-92. Arg-128 contributes to the GTP binding site. Gly-132 is a binding site for S-adenosyl-L-methionine. Thr-159 provides a ligand contact to GTP. Residue Ser-183 coordinates S-adenosyl-L-methionine. Lys-220 provides a ligand contact to GTP. Position 254 (Met-254) interacts with S-adenosyl-L-methionine. [4Fe-4S] cluster-binding residues include Cys-317 and Cys-320. 322–324 serves as a coordination point for GTP; that stretch reads RLR. Cys-334 contacts [4Fe-4S] cluster.

Belongs to the radical SAM superfamily. MoaA family. As to quaternary structure, homodimer. [4Fe-4S] cluster serves as cofactor. In terms of tissue distribution, expressed in all organs, with an abundant expression in the roots.

It is found in the mitochondrion matrix. It catalyses the reaction GTP + AH2 + S-adenosyl-L-methionine = (8S)-3',8-cyclo-7,8-dihydroguanosine 5'-triphosphate + 5'-deoxyadenosine + L-methionine + A + H(+). It functions in the pathway cofactor biosynthesis; molybdopterin biosynthesis. Its function is as follows. Catalyzes the cyclization of GTP to (8S)-3',8-cyclo-7,8-dihydroguanosine 5'-triphosphate. The protein is GTP 3',8-cyclase, mitochondrial (CNX2) of Arabidopsis thaliana (Mouse-ear cress).